The sequence spans 211 residues: Probable endopeptidase cgR_2070 (211 aa).

An N-terminal signal peptide occupies residues 1–35 (MGKHRRNNSNATRKAVAASAVALGATAAIASPAQA). In terms of domain architecture, NlpC/P60 spans 97–211 (ASTGQAIVDA…YMPFHSAVRF (115 aa)). The active-site Nucleophile is Cys127. His175 acts as the Proton acceptor in catalysis. His187 is a catalytic residue.

It belongs to the peptidase C40 family.

Its subcellular location is the secreted. In Corynebacterium glutamicum (strain R), this protein is Probable endopeptidase cgR_2070.